Consider the following 89-residue polypeptide: Small ribosomal subunit protein uS15 (89 aa).

This sequence belongs to the universal ribosomal protein uS15 family. Part of the 30S ribosomal subunit. Forms a bridge to the 50S subunit in the 70S ribosome, contacting the 23S rRNA.

Its function is as follows. One of the primary rRNA binding proteins, it binds directly to 16S rRNA where it helps nucleate assembly of the platform of the 30S subunit by binding and bridging several RNA helices of the 16S rRNA. In terms of biological role, forms an intersubunit bridge (bridge B4) with the 23S rRNA of the 50S subunit in the ribosome. The polypeptide is Small ribosomal subunit protein uS15 (Shewanella denitrificans (strain OS217 / ATCC BAA-1090 / DSM 15013)).